A 231-amino-acid chain; its full sequence is Probable methylthioribulose-1-phosphate dehydratase (231 aa).

Position 82 (Cys-82) interacts with substrate. The Zn(2+) site is built by His-100 and His-102. Glu-123 serves as the catalytic Proton donor/acceptor. Residue His-181 coordinates Zn(2+).

It belongs to the aldolase class II family. MtnB subfamily. It depends on Zn(2+) as a cofactor.

The protein localises to the cytoplasm. It carries out the reaction 5-(methylsulfanyl)-D-ribulose 1-phosphate = 5-methylsulfanyl-2,3-dioxopentyl phosphate + H2O. It functions in the pathway amino-acid biosynthesis; L-methionine biosynthesis via salvage pathway; L-methionine from S-methyl-5-thio-alpha-D-ribose 1-phosphate: step 2/6. Its function is as follows. Catalyzes the dehydration of methylthioribulose-1-phosphate (MTRu-1-P) into 2,3-diketo-5-methylthiopentyl-1-phosphate (DK-MTP-1-P). The protein is Probable methylthioribulose-1-phosphate dehydratase of Dictyostelium discoideum (Social amoeba).